Reading from the N-terminus, the 371-residue chain is tRNA-specific 2-thiouridylase MnmA (371 aa).

Residues 9–16 (AMSGGVDS) and M35 contribute to the ATP site. C109 functions as the Nucleophile in the catalytic mechanism. A disulfide bridge connects residues C109 and C207. G133 contacts ATP. The interaction with tRNA stretch occupies residues 157-159 (KDQ). Catalysis depends on C207, which acts as the Cysteine persulfide intermediate.

It belongs to the MnmA/TRMU family.

The protein resides in the cytoplasm. It catalyses the reaction S-sulfanyl-L-cysteinyl-[protein] + uridine(34) in tRNA + AH2 + ATP = 2-thiouridine(34) in tRNA + L-cysteinyl-[protein] + A + AMP + diphosphate + H(+). Its function is as follows. Catalyzes the 2-thiolation of uridine at the wobble position (U34) of tRNA, leading to the formation of s(2)U34. The polypeptide is tRNA-specific 2-thiouridylase MnmA (Solibacter usitatus (strain Ellin6076)).